The primary structure comprises 511 residues: Cytochrome P450 monooxygenase cypX (511 aa).

Residues 18–38 form a helical membrane-spanning segment; sequence LPFSLALVAAAFVLYNIVSII. 2 N-linked (GlcNAc...) asparagine glycosylation sites follow: Asn162 and Asn407. Cys454 lines the heme pocket.

The protein belongs to the cytochrome P450 family. It depends on heme as a cofactor.

The protein resides in the membrane. Its pathway is mycotoxin biosynthesis. Cytochrome P450 monooxygenase; part of the fragmented gene cluster that mediates the biosynthesis of dothistromin (DOTH), a polyketide toxin very similar in structure to the aflatoxin precursor, versicolorin B. The first step of the pathway is the conversion of acetate to norsolorinic acid (NOR) and requires the fatty acid synthase subunits hexA and hexB, as well as the polyketide synthase pksA. PksA combines a hexanoyl starter unit and 7 malonyl-CoA extender units to synthesize the precursor NOR. The hexanoyl starter unit is provided to the acyl-carrier protein (ACP) domain by the fungal fatty acid synthase hexA/hexB. The second step is the conversion of NOR to averantin (AVN) and requires the norsolorinic acid ketoreductase nor1, which catalyzes the dehydration of norsolorinic acid to form (1'S)-averantin. The cytochrome P450 monooxygenase avnA then catalyzes the hydroxylation of AVN to 5'hydroxyaverantin (HAVN). The next step is performed by adhA that transforms HAVN to averufin (AVF). Averufin might then be converted to hydroxyversicolorone by cypX and avfA. Hydroxyversicolorone is further converted versiconal hemiacetal acetate (VHA) by moxY. VHA is then the substrate for the versiconal hemiacetal acetate esterase est1 to yield versiconal (VAL). Versicolorin B synthase vbsA then converts VAL to versicolorin B (VERB) by closing the bisfuran ring. Then, the activity of the versicolorin B desaturase verB leads to versicolorin A (VERA). DotB, a predicted chloroperoxidase, may perform epoxidation of the A-ring of VERA. Alternatively, a cytochrome P450, such as cypX or avnA could catalyze this step. It is also possible that another, uncharacterized, cytochrome P450 enzyme is responsible for this step. Opening of the epoxide could potentially be achieved by the epoxide hydrolase epoA. However, epoA seems not to be required for DOTH biosynthesis, but other epoxide hydrolases may have the ability to complement this hydrolysis. Alternatively, opening of the epoxide ring could be achieved non-enzymatically. The next step is the deoxygenation of ring A to yield the 5,8-dihydroxyanthraquinone which is most likely catalyzed by the NADPH dehydrogenase encoded by ver1. The last stages of DOTH biosynthesis are proposed to involve hydroxylation of the bisfuran. OrdB and norB might have oxidative roles here. An alternative possibility is that cytochrome P450 monoogenases such as avnA and cypX might perform these steps in addition to previously proposed steps. The protein is Cytochrome P450 monooxygenase cypX of Dothistroma septosporum (Red band needle blight fungus).